Reading from the N-terminus, the 335-residue chain is Mevalonate kinase (335 aa).

111–121 (PVGAGLGSSAA) contributes to the ATP binding site. Aspartate 162 functions as the Proton acceptor in the catalytic mechanism.

The protein belongs to the GHMP kinase family. Mevalonate kinase subfamily. As to quaternary structure, homodimer. Requires Mg(2+) as cofactor.

The protein resides in the cytoplasm. It catalyses the reaction (R)-mevalonate + ATP = (R)-5-phosphomevalonate + ADP + H(+). It functions in the pathway isoprenoid biosynthesis; isopentenyl diphosphate biosynthesis via mevalonate pathway; isopentenyl diphosphate from (R)-mevalonate: step 1/3. Functionally, catalyzes the phosphorylation of (R)-mevalonate (MVA) to (R)-mevalonate 5-phosphate (MVAP). Functions in the mevalonate (MVA) pathway leading to isopentenyl diphosphate (IPP), a key precursor for the biosynthesis of isoprenoid compounds such as archaeal membrane lipids. This chain is Mevalonate kinase, found in Pyrococcus abyssi (strain GE5 / Orsay).